Here is a 272-residue protein sequence, read N- to C-terminus: Cytochrome c1 (272 aa).

The signal sequence occupies residues 1-24 (MTTIVKRALVAAGMVLAIGGAAQA). Heme c contacts are provided by Cys-61, Cys-64, His-65, and Met-200. A helical membrane pass occupies residues 244-261 (LGLKVLLFLGVLTAMLLA).

The main subunits of complex b-c1 are: cytochrome b, cytochrome c1 and the Rieske protein. In terms of processing, binds 1 heme c group covalently per subunit.

Its subcellular location is the cell membrane. In terms of biological role, component of the ubiquinol-cytochrome c reductase complex (complex III or cytochrome b-c1 complex), which is a respiratory chain that generates an electrochemical potential coupled to ATP synthesis. This chain is Cytochrome c1 (petC), found in Rhodospirillum rubrum.